Reading from the N-terminus, the 449-residue chain is Chromosomal replication initiator protein DnaA (449 aa).

The tract at residues 1–83 is domain I, interacts with DnaA modulators; it reads MDDSLWSACL…VELEIGSPPT (83 aa). Residues 77 to 114 are disordered; sequence EIGSPPTPDQREAATGATRAAPAQRSSEPRQRPVDSNL. The tract at residues 83–112 is domain II; sequence TPDQREAATGATRAAPAQRSSEPRQRPVDS. Residues 89 to 99 show a composition bias toward low complexity; sequence AATGATRAAPA. Residues 113-329 form a domain III, AAA+ region region; the sequence is NLNPGFTFDS…GALRRITANA (217 aa). ATP is bound by residues Gly157, Gly159, Lys160, and Thr161. The domain IV, binds dsDNA stretch occupies residues 330–449; that stretch reads QFTGRAIDVD…YDNLLRTLST (120 aa).

It belongs to the DnaA family. As to quaternary structure, oligomerizes as a right-handed, spiral filament on DNA at oriC.

The protein localises to the cytoplasm. In terms of biological role, plays an essential role in the initiation and regulation of chromosomal replication. ATP-DnaA binds to the origin of replication (oriC) to initiate formation of the DNA replication initiation complex once per cell cycle. Binds the DnaA box (a 9 base pair repeat at the origin) and separates the double-stranded (ds)DNA. Forms a right-handed helical filament on oriC DNA; dsDNA binds to the exterior of the filament while single-stranded (ss)DNA is stabiized in the filament's interior. The ATP-DnaA-oriC complex binds and stabilizes one strand of the AT-rich DNA unwinding element (DUE), permitting loading of DNA polymerase. After initiation quickly degrades to an ADP-DnaA complex that is not apt for DNA replication. Binds acidic phospholipids. This Halorhodospira halophila (strain DSM 244 / SL1) (Ectothiorhodospira halophila (strain DSM 244 / SL1)) protein is Chromosomal replication initiator protein DnaA.